Reading from the N-terminus, the 415-residue chain is Protein fuzzy homolog (415 aa).

This sequence belongs to the fuzzy family. Component of the CPLANE (ciliogenesis and planar polarity effectors) complex, composed of INTU, FUZ and WDPCP. Interacts with CPLANE1. Interacts with CPLANE2. In terms of tissue distribution, expressed in dermal and epidermal cells.

Its subcellular location is the cytoplasm. The protein localises to the cytoskeleton. The protein resides in the cilium basal body. Functionally, probable planar cell polarity effector involved in cilium biogenesis. May regulate protein and membrane transport to the cilium. Proposed to function as core component of the CPLANE (ciliogenesis and planar polarity effectors) complex involved in the recruitment of peripheral IFT-A proteins to basal bodies. May regulate the morphogenesis of hair follicles which depends on functional primary cilia. Binds phosphatidylinositol 3-phosphate with highest affinity, followed by phosphatidylinositol 4-phosphate and phosphatidylinositol 5-phosphate. The chain is Protein fuzzy homolog (Fuz) from Mus musculus (Mouse).